A 565-amino-acid polypeptide reads, in one-letter code: Glycine/sarcosine/dimethylglycine N-methyltransferase (565 aa).

Basic and acidic residues predominate over residues 1–10 (MTKSVDDLAR). The tract at residues 1–34 (MTKSVDDLARGDQAGDEQDPVHREQQTFGDNPLE) is disordered. Residues Tyr45, Trp53, Arg62, Ala86, Asp107, 134–135 (DW), and Leu152 each bind S-adenosyl-L-methionine. Substrate contacts are provided by Asn154, Arg187, and Tyr226.

This sequence belongs to the class I-like SAM-binding methyltransferase superfamily. Glycine N-methyltransferase family. As to quaternary structure, monomer.

The enzyme catalyses glycine + 2 S-adenosyl-L-methionine = N,N-dimethylglycine + 2 S-adenosyl-L-homocysteine + 2 H(+). It catalyses the reaction sarcosine + 2 S-adenosyl-L-methionine = glycine betaine + 2 S-adenosyl-L-homocysteine + 2 H(+). The catalysed reaction is glycine + S-adenosyl-L-methionine = sarcosine + S-adenosyl-L-homocysteine + H(+). It carries out the reaction sarcosine + S-adenosyl-L-methionine = N,N-dimethylglycine + S-adenosyl-L-homocysteine + H(+). The enzyme catalyses N,N-dimethylglycine + S-adenosyl-L-methionine = glycine betaine + S-adenosyl-L-homocysteine + H(+). It participates in amine and polyamine biosynthesis; betaine biosynthesis via glycine pathway; betaine from glycine: step 1/3. The protein operates within amine and polyamine biosynthesis; betaine biosynthesis via glycine pathway; betaine from glycine: step 2/3. It functions in the pathway amine and polyamine biosynthesis; betaine biosynthesis via glycine pathway; betaine from glycine: step 3/3. In terms of biological role, catalyzes the methylation of glycine, sarcosine and dimethylglycine to sarcosine, dimethylglycine and betaine, respectively, with S-adenosylmethionine (AdoMet) acting as the methyl donor. Shows low level of activity on glycine when expressed in E.coli. This is Glycine/sarcosine/dimethylglycine N-methyltransferase from Actinopolyspora halophila.